The chain runs to 548 residues: uncharacterized protein (548 aa).

2 positions are modified to phosphoserine: Ser19 and Ser25. Phosphothreonine is present on Thr47.

This is an uncharacterized protein from Schizosaccharomyces pombe (strain 972 / ATCC 24843) (Fission yeast).